Reading from the N-terminus, the 272-residue chain is Phosphatidylglycerol--prolipoprotein diacylglyceryl transferase (272 aa).

The next 7 helical transmembrane spans lie at Leu17–Ala37, Leu55–Tyr75, Val90–Phe110, Phe125–Gly145, Pro174–Phe194, Met202–Phe222, and Gly230–Ile250. Arg138 contributes to the a 1,2-diacyl-sn-glycero-3-phospho-(1'-sn-glycerol) binding site.

The protein belongs to the Lgt family.

It is found in the cell inner membrane. The catalysed reaction is L-cysteinyl-[prolipoprotein] + a 1,2-diacyl-sn-glycero-3-phospho-(1'-sn-glycerol) = an S-1,2-diacyl-sn-glyceryl-L-cysteinyl-[prolipoprotein] + sn-glycerol 1-phosphate + H(+). It participates in protein modification; lipoprotein biosynthesis (diacylglyceryl transfer). Catalyzes the transfer of the diacylglyceryl group from phosphatidylglycerol to the sulfhydryl group of the N-terminal cysteine of a prolipoprotein, the first step in the formation of mature lipoproteins. The protein is Phosphatidylglycerol--prolipoprotein diacylglyceryl transferase of Acinetobacter baumannii (strain AB307-0294).